A 135-amino-acid chain; its full sequence is MAQAFQFELVSPERLLLSAQVTEVVIPGSEGYLTALAGHSPLMTTIMPGVVSVKLADGKSDSYVVFGGFADITPQGCTVLAESATHVDDIDPADIQRRIEHARKALDDASSNEHRTKAEIFLHQLMTLQGTIMPA.

The protein belongs to the ATPase epsilon chain family. In terms of assembly, F-type ATPases have 2 components, CF(1) - the catalytic core - and CF(0) - the membrane proton channel. CF(1) has five subunits: alpha(3), beta(3), gamma(1), delta(1), epsilon(1). CF(0) has three main subunits: a, b and c.

It is found in the cell inner membrane. Its function is as follows. Produces ATP from ADP in the presence of a proton gradient across the membrane. The chain is ATP synthase epsilon chain from Brucella anthropi (strain ATCC 49188 / DSM 6882 / CCUG 24695 / JCM 21032 / LMG 3331 / NBRC 15819 / NCTC 12168 / Alc 37) (Ochrobactrum anthropi).